Here is a 660-residue protein sequence, read N- to C-terminus: DNA topoisomerase I, plasmid (660 aa).

Residues 1–110 form the Toprim domain; it reads MKLMIIESPG…LRVTFNEITA (110 aa). Mg(2+)-binding residues include glutamate 7 and aspartate 79. Positions 124 to 550 constitute a Topo IA-type catalytic domain; it reads DVKRVAAQEA…KVHDQLNMEL (427 aa). Positions 158–163 are interaction with DNA; sequence SAGRVQ. Catalysis depends on tyrosine 287, which acts as the O-(5'-phospho-DNA)-tyrosine intermediate. 2 consecutive C4-type zinc fingers follow at residues 563 to 589 and 613 to 643; these read CQECGKPLRRIPGKNGHFWGCSGYPDC and CVKCGNPLKHLVKKGKGGYDFWGCSGFKEGC.

The protein belongs to the type IA topoisomerase family. As to quaternary structure, monomer. Mg(2+) serves as cofactor.

The catalysed reaction is ATP-independent breakage of single-stranded DNA, followed by passage and rejoining.. Functionally, releases the supercoiling and torsional tension of DNA, which is introduced during the DNA replication and transcription, by transiently cleaving and rejoining one strand of the DNA duplex. Introduces a single-strand break via transesterification at a target site in duplex DNA. The scissile phosphodiester is attacked by the catalytic tyrosine of the enzyme, resulting in the formation of a DNA-(5'-phosphotyrosyl)-enzyme intermediate and the expulsion of a 3'-OH DNA strand. The free DNA strand then undergoes passage around the unbroken strand, thus removing DNA supercoils. Finally, in the religation step, the DNA 3'-OH attacks the covalent intermediate to expel the active-site tyrosine and restore the DNA phosphodiester backbone. In Xylella fastidiosa (strain 9a5c), this protein is DNA topoisomerase I, plasmid.